Reading from the N-terminus, the 233-residue chain is MSACQTPLIVALDFPTRDAALKLADQLDPALCRVKVGKELFTSSASGIVESLCAKGFEVFLDLKFHDIPNTTAMAVKAAAEMGVWMVNVHCSGGLRMMSACREVLAKRSGPQPLLIGVTVLTSMEREDLAGIGLDIEPQEQVLRLAALAEKAGMDGLVCSALEAPALKAAHPSLQLVTPGIRPAGSAQDDQRRILTPRQALDAGSDYLVIGRPISQAADPAQALAAVVAEIRS.

Substrate is bound by residues D13, K35, 62–71, T122, R182, Q191, G211, and R212; that span reads DLKFHDIPNT. K64 serves as the catalytic Proton donor.

This sequence belongs to the OMP decarboxylase family. Type 1 subfamily. As to quaternary structure, homodimer.

The enzyme catalyses orotidine 5'-phosphate + H(+) = UMP + CO2. It functions in the pathway pyrimidine metabolism; UMP biosynthesis via de novo pathway; UMP from orotate: step 2/2. Its function is as follows. Catalyzes the decarboxylation of orotidine 5'-monophosphate (OMP) to uridine 5'-monophosphate (UMP). This chain is Orotidine 5'-phosphate decarboxylase, found in Pseudomonas putida (strain W619).